A 458-amino-acid chain; its full sequence is SH2 domain-containing protein 7 (458 aa).

One can recognise an SH2 domain in the interval 51-142; sequence WFHGFITRKQ…PFGETLAAAC (92 aa). Disordered stretches follow at residues 204 to 235 and 267 to 326; these read RSVS…SPAG and AGSL…TLGS. Basic and acidic residues predominate over residues 278-288; that stretch reads PSGKLSDEDQN. Polar residues predominate over residues 304–326; sequence QGSTMPYTSLGFSLPPSSETLGS.

This is SH2 domain-containing protein 7 (Sh2d7) from Mus musculus (Mouse).